A 1287-amino-acid chain; its full sequence is DENN domain-containing protein 5A (1287 aa).

The region spanning 57–259 (STTEGENFEQ…EVPLPPPGRS (203 aa)) is the uDENN domain. Serine 193 bears the Phosphoserine mark. Positions 278–414 (ELPLFDFPVK…LEFVQEVSEI (137 aa)) constitute a cDENN domain. The dDENN domain maps to 416 to 598 (MAFGVPPEGN…IMCHDDDDKD (183 aa)). The RUN 1 domain maps to 787–950 (VEENTLIASL…DYFCFTNVFT (164 aa)). The PLAT domain occupies 954–1062 (IPYHILIVPS…DDGSLERVLV (109 aa)). Threonine 1079 is modified (phosphothreonine). Phosphoserine is present on residues serine 1085, serine 1087, and serine 1096. The RUN 2 domain occupies 1134–1280 (TLLLCGECGL…QEFNITLDTS (147 aa)).

Belongs to the RAB6IP1 family. As to quaternary structure, interacts with RAB6A bound to GTP. As to expression, expressed in developing brain and developing neurons.

The protein resides in the golgi apparatus membrane. Its function is as follows. Guanine nucleotide exchange factor (GEF) which may activate RAB6A and RAB39A and/or RAB39B. Promotes the exchange of GDP to GTP, converting inactive GDP-bound Rab proteins into their active GTP-bound form. Involved in the negative regulation of neurite outgrowth. This is DENN domain-containing protein 5A (Dennd5a) from Rattus norvegicus (Rat).